A 504-amino-acid chain; its full sequence is Tachykinin-like peptides receptor 86C (504 aa).

Residues 1-84 (MSEIVDTELL…PYELPWEQKT (84 aa)) lie on the Extracellular side of the membrane. Asparagine 12, asparagine 28, and asparagine 36 each carry an N-linked (GlcNAc...) asparagine glycan. Residues 85–108 (IWAIIFGLMMFVAIAGNGIVLWIV) form a helical membrane-spanning segment. Over 109-118 (TGHRSMRTVT) the chain is Cytoplasmic. A helical membrane pass occupies residues 119 to 143 (NYFLLNLSIADLLMSSLNCVFNFIF). The Extracellular portion of the chain corresponds to 144–155 (MLNSDWPFGSIY). Residues 156–179 (CTINNFVANVTVSTSVFTLVAISF) form a helical membrane-spanning segment. The Cytoplasmic portion of the chain corresponds to 180 to 199 (DRYIAIVHPLKRRTSRRKVR). A helical membrane pass occupies residues 200–224 (IILVLIWALSCVLSAPCLLYSSIMT). Residues 225 to 250 (KHYYNGKSRTVCFMMWPDGRYPTSMA) are Extracellular-facing. The helical transmembrane segment at 251–275 (DYAYNLIILVLTYGIPMIVMLICYS) threads the bilayer. Over 276–308 (LMGRVLWGSRSIGENTDRQMESMKSKRKVVRMF) the chain is Cytoplasmic. Residues 309 to 330 (IAIVSIFAICWLPYHLFFIYAY) form a helical membrane-spanning segment. Topologically, residues 331–343 (HNNQVASTKYVQH) are extracellular. The chain crosses the membrane as a helical span at residues 344-367 (MYLGFYWLAMSNAMVNPLIYYWMN). Over 368–504 (KRFRMYFQRI…NPVELSPKQM (137 aa)) the chain is Cytoplasmic. Residues 393 to 450 (PKSRLTNKNSSNRHTRAETKSQWKRSTMETQIQQAPVTSSCREQRSAQQQQPPGSGTN) are disordered. 2 stretches are compositionally biased toward polar residues: residues 395-404 (SRLTNKNSSN) and 416-450 (KRST…SGTN).

The protein belongs to the G-protein coupled receptor 1 family. In terms of tissue distribution, expressed in central nervous system, as well as in subsets of neurons in each segment of the developing ventral ganglia.

The protein localises to the cell membrane. Functionally, receptor for tachykinin-like peptides. In Drosophila melanogaster (Fruit fly), this protein is Tachykinin-like peptides receptor 86C (TkR86C).